The chain runs to 260 residues: Indole-3-glycerol phosphate synthase (260 aa).

This sequence belongs to the TrpC family.

It carries out the reaction 1-(2-carboxyphenylamino)-1-deoxy-D-ribulose 5-phosphate + H(+) = (1S,2R)-1-C-(indol-3-yl)glycerol 3-phosphate + CO2 + H2O. Its pathway is amino-acid biosynthesis; L-tryptophan biosynthesis; L-tryptophan from chorismate: step 4/5. The chain is Indole-3-glycerol phosphate synthase from Chloroherpeton thalassium (strain ATCC 35110 / GB-78).